The following is a 161-amino-acid chain: Nucleotide-binding protein Pcar_0033 (161 aa).

This sequence belongs to the YajQ family.

Nucleotide-binding protein. The chain is Nucleotide-binding protein Pcar_0033 from Syntrophotalea carbinolica (strain DSM 2380 / NBRC 103641 / GraBd1) (Pelobacter carbinolicus).